The following is a 276-amino-acid chain: Extracellular metalloprotease 1 (276 aa).

A signal peptide spans M1 to A18. Zn(2+) is bound at residue H191. E192 is an active-site residue. Residue H195 participates in Zn(2+) binding. Positions G211 to S233 are disordered. C227 and C253 are disulfide-bonded.

The protein belongs to the peptidase M43B family.

The protein resides in the secreted. Secreted metalloproteinase that allows assimilation of proteinaceous substrates. Pays a pivotal role as a pathogenicity determinant during infections and contributes to the ability of the pathogen to persist within the mammalian host. Digests an immunodominant cell surface antigen (SOWgp) and prevents host recognition of endospores during the phase of development when these fungal cells are most vulnerable to phagocytic cell defenses. This chain is Extracellular metalloprotease 1 (MEP1), found in Coccidioides posadasii (strain C735) (Valley fever fungus).